The primary structure comprises 499 residues: MNGSKDLPEPYDYDLIIIGGGSGGLAAAKEAAKYDKKVMVLDFVTPTPLGTRWGLGGTCVNVGCIPKKLMHQAALLGQALRDSRNYGWNVEETVKHDWERMTEAVQNHIGSLNWGYRVALREKKVTYENAYGEFVGPHRIKATNNKGKEKIYSAERFLIATGERPRYLGIPGDKEYCISSDDLFSLPYCPGKTLVVGASYVALECAGFLAGIGLDVTVMVRSILLRGFDQDMANKIGEHMQEHGIKFIRQFVPIKVEQIEAGTPGRLRVIAKSTDSDQTIEGEYNTVLLAIGRDACTRKIGLENVGVKINEKTGKIPVTEEEQTNVPYIYAIGDILEGKLELTPVAIQAGRLLAQRLYGGSTVKCDYENVPTTVFTPLEYGSCGLSEEKAVEKFGEENVEVYHSYFWPLEWTIPSRDNNKCYAKVVCNIKDNERVVGFHVLGPNAGEVTQGFAAALKCGLTKDQLDSTIGIHPVCAEVFTTLSVTKRSGGNILQTGCUG.

Residues Ser-22–Gly-23, Asp-42–Phe-43, Thr-58–Cys-59, and Gly-63–Lys-67 each bind FAD. Cys-59 and Cys-64 are joined by a disulfide. The residue at position 68 (Lys-68) is an N6-succinyllysine. Residue Tyr-131 is modified to Phosphotyrosine. Residues Tyr-131–Gly-132 and Thr-161 contribute to the FAD site. NADP(+) is bound by residues Arg-166, Ala-198–Glu-204, Arg-221–Ser-222, Arg-226, Arg-226–Phe-228, Gly-292–Arg-293, and Lys-315. Tyr-200 is an FAD binding site. FAD is bound by residues Asp-334, Glu-341–Thr-343, and His-472. NADP(+) is bound at residue Glu-341. Catalysis depends on His-472, which acts as the Proton acceptor. Positions Cys-497–Sec-498 form a cross-link, cysteinyl-selenocysteine (Cys-Sec). Residue Sec-498 is a non-standard amino acid, selenocysteine.

It belongs to the class-I pyridine nucleotide-disulfide oxidoreductase family. In terms of assembly, homodimer. Requires FAD as cofactor. In terms of processing, ISGylated.

The protein localises to the cytoplasm. The enzyme catalyses [thioredoxin]-dithiol + NADP(+) = [thioredoxin]-disulfide + NADPH + H(+). It carries out the reaction H2O2 + NADPH + H(+) = NADP(+) + 2 H2O. Reduces disulfideprotein thioredoxin (Trx) to its dithiol-containing form. Homodimeric flavoprotein involved in the regulation of cellular redox reactions, growth and differentiation. Contains a selenocysteine residue at the C-terminal active site that is essential for catalysis. Also has reductase activity on hydrogen peroxide (H2O2). The chain is Thioredoxin reductase 1, cytoplasmic (TXNRD1) from Bos taurus (Bovine).